A 175-amino-acid chain; its full sequence is tRNA (cytidine(56)-2'-O)-methyltransferase (175 aa).

Leu83 is a binding site for S-adenosyl-L-methionine.

This sequence belongs to the aTrm56 family. Homodimer.

The protein localises to the cytoplasm. The enzyme catalyses cytidine(56) in tRNA + S-adenosyl-L-methionine = 2'-O-methylcytidine(56) in tRNA + S-adenosyl-L-homocysteine + H(+). Its function is as follows. Specifically catalyzes the AdoMet-dependent 2'-O-ribose methylation of cytidine at position 56 in tRNAs. This chain is tRNA (cytidine(56)-2'-O)-methyltransferase, found in Methanosphaera stadtmanae (strain ATCC 43021 / DSM 3091 / JCM 11832 / MCB-3).